The sequence spans 92 residues: Cell division protein FtsB (92 aa).

At 1–3 (MRL) the chain is on the cytoplasmic side. The helical transmembrane segment at 4–21 (LILILLSVLVLFQHDFWF) threads the bilayer. Topologically, residues 22–92 (GSNGFLDYRQ…VFYHIVKESK (71 aa)) are periplasmic. Residues 28-63 (DYRQNAEKIKENQAENEKLSQRNQRINAEIQGLTKG) are a coiled coil.

The protein belongs to the FtsB family. As to quaternary structure, part of a complex composed of FtsB, FtsL and FtsQ.

The protein localises to the cell inner membrane. Essential cell division protein. May link together the upstream cell division proteins, which are predominantly cytoplasmic, with the downstream cell division proteins, which are predominantly periplasmic. This chain is Cell division protein FtsB, found in Haemophilus influenzae (strain PittEE).